The sequence spans 600 residues: Aspartate--tRNA(Asp/Asn) ligase (600 aa).

Residue Glu174 coordinates L-aspartate. The segment at 198–201 (QLFK) is aspartate. Arg220 contributes to the L-aspartate binding site. ATP contacts are provided by residues 220–222 (RDE) and Gln229. His457 is a binding site for L-aspartate. Glu491 contacts ATP. Arg498 contacts L-aspartate. Residue 543–546 (GLDR) participates in ATP binding.

It belongs to the class-II aminoacyl-tRNA synthetase family. Type 1 subfamily. In terms of assembly, homodimer.

Its subcellular location is the cytoplasm. It catalyses the reaction tRNA(Asx) + L-aspartate + ATP = L-aspartyl-tRNA(Asx) + AMP + diphosphate. Functionally, aspartyl-tRNA synthetase with relaxed tRNA specificity since it is able to aspartylate not only its cognate tRNA(Asp) but also tRNA(Asn). Reaction proceeds in two steps: L-aspartate is first activated by ATP to form Asp-AMP and then transferred to the acceptor end of tRNA(Asp/Asn). This chain is Aspartate--tRNA(Asp/Asn) ligase, found in Burkholderia lata (strain ATCC 17760 / DSM 23089 / LMG 22485 / NCIMB 9086 / R18194 / 383).